The primary structure comprises 204 residues: NNYCKIKCLKGGVHTACKYGSLKPNCGNKVVVSYGLTKQEKQDILKEHNDFRQKIARGLETRGNPGPQPPAKNMKNLVWNDELAYVAQVWANQCQYGHDTCRDIAKYQVGQNVALTGSTAAKYDDPVKLVKMWEDEVKDYNPKKKFSGNNFLKTGHYTQMVWANTKEVGCGSIKFIQEKWHKHYLVCNYGPSGNFQNEELYQTK.

Cystine bridges form between Cys4/Cys17, Cys8/Cys101, Cys26/Cys94, and Cys170/Cys187. Residues 45 to 189 form the SCP domain; the sequence is LKEHNDFRQK…WHKHYLVCNY (145 aa).

The protein belongs to the CRISP family. Venom allergen 5-like subfamily. As to expression, expressed by the venom gland.

It localises to the secreted. May have an ancestral function in the promotion of ovum fertilization by sperm. In Vespula flavopilosa (Downy yellowjacket), this protein is Venom allergen 5.